Reading from the N-terminus, the 369-residue chain is MPTNRAAWQPAKKAPLLEVKAAPYPPPKANRIVVKNGAVAVNPIDWLIQSKGDIMFTWLKYPFVLGSDVAGEVVEVGKNVTRFQVGDRVLGFARGTDEKVNDSSEGAFQEYTVLVPDLTAHIPSSLSFESAAVIPLGLATAGAGLFQQDQLGLQLPTSPARPPTGQTVLIWGGSTSVGSNAIQLAVAAGYEVFTTASRKNFEYAAKLGAAKVFDYRSGSVTQDIIRAFKGRTSAGALAIGQGGAEACMEVLDHVQGRKFIALASYPVPQEEPKRLVMLRTIIFFVSWIISFKFKGLLKGIKSNFIFATSVNHNGIGKALFVDFLPDALRAGEFVPAPDAQVAGKGLESIQTAFEQQKQGVSAKKIVVSL.

Residues 13–367 form the Enoyl reductase (ER) domain; that stretch reads KAPLLEVKAA…QGVSAKKIVV (355 aa). Residue 44-49 participates in NADP(+) binding; sequence IDWLIQ. Asn79 and Asn101 each carry an N-linked (GlcNAc...) asparagine glycan. NADP(+)-binding positions include 197–200 and Tyr215; that span reads SRKN. A helical membrane pass occupies residues 280-300; the sequence is TIIFFVSWIISFKFKGLLKGI. An NADP(+)-binding site is contributed by 360–361; sequence VS.

The protein belongs to the zinc-containing alcohol dehydrogenase family.

It localises to the membrane. Its pathway is secondary metabolite biosynthesis. In terms of biological role, dehydrogenase; part of the gene cluster that mediates the biosynthesis of azaphilone pigments (MonAzPs), a complex mixture of compounds with a common azaphilone skeleton very widely used as food colorants. Within the pathway, pigH might be involved in the late steps of yellow pigments monascin and ankaflavin biosynthesis. The first step of the pathway is performed by the nrPKS pigA that forms the hexaketide precursor from successive condensations of five malonyl-CoA units, with a simple acetyl-CoA starter unit. The role of esterase pigG is not clear, but it may play at most a supplementary role in the formation of the benzaldehyde produced by the pigA nrPKS. This very reactive benzaldehyde is intercepted by the pigC ketoreductase that to provide the first stable enzyme-free MonAzPs intermediate, 6-(4-hydroxy-2-oxopentyl)-3-methyl-2,4-dioxocyclohexane carbaldehyde, also known as M7PKS-1. The FAD-dependent monooxygenase pigN hydroxylates M7PKS-1 at C-4, which triggers the formation of the pyran ring. PigJ, pigK and pigD are involved in the acetylation of the pyran ring. PigJ and pigK form the two subunits of a dedicated fungal FAS that produces the side chain fatty acyl moiety of MonAzPs and pigD transfers the fatty acyl chain to the C-4 alcohol. PigM and pigO are involved in the elimination of the omega-1 alcohol. PigM acts as an O-acetyltransferase that synthesizes the putative O-11 acetyl intermediate whereas pigO eliminates acetic acid to yield an intermediate with a C10(11) double bond. The dehydration of the C-11 alcohol followed by the reduction of the C6(7) double bond by the NAD(P)H-dependent oxidoreductase pigE increases the electrophilicity of the C-5 ketone of the resulting acyl benzopyran. This in turn sets up the C-5 ketone for an intramolecular Knoevenagel aldol condensation with the C-20 enol of the side chain. This condensation affords the characteristic linear tricyclic carbon skeletons of the yellow pigments that serve as the common precursors for the classical yellow pigments monascin and ankaflavin, orange pigments rubopunctatin and monascorubrin, and red pigments ribropunctamine and monascorubramine. The FAD-dependent oxidoreductase pigF is especially invoved in the biosynthesis of orange and red pigments via desaturation of C6(7). The polypeptide is Dehydrogenase pigH (Monascus ruber (Mold)).